The chain runs to 254 residues: MKKKIIAANWKLNGSIKTISYFLTFLKSQISSFLKNNIIIIAPPTVFLERVYKDINSINIHLAAQNIDVNLTGAFTGENSALMMKDIGVKYIIIGHSERRLLHNENNEIIAKKFCLVKNLNLVPILCIGETEAEKKSNKTEKILKEQLNSIFNSFGEKAFRNAVIAYEPIWSIGTGVSADPKNVQLIHKFIKNYIKKYDIVSAENLIVQYGGSVTSLNAGNFLKQPDIDGLLIGSASLKHEEFLKIIKISDSFL.

Asn-9 to Lys-11 contributes to the substrate binding site. His-96 serves as the catalytic Electrophile. Glu-168 acts as the Proton acceptor in catalysis. Positions 174 and 213 each coordinate substrate.

The protein belongs to the triosephosphate isomerase family. In terms of assembly, homodimer.

It localises to the cytoplasm. The enzyme catalyses D-glyceraldehyde 3-phosphate = dihydroxyacetone phosphate. It participates in carbohydrate biosynthesis; gluconeogenesis. Its pathway is carbohydrate degradation; glycolysis; D-glyceraldehyde 3-phosphate from glycerone phosphate: step 1/1. Its function is as follows. Involved in the gluconeogenesis. Catalyzes stereospecifically the conversion of dihydroxyacetone phosphate (DHAP) to D-glyceraldehyde-3-phosphate (G3P). The polypeptide is Triosephosphate isomerase (Buchnera aphidicola subsp. Schizaphis graminum (strain Sg)).